We begin with the raw amino-acid sequence, 344 residues long: MAP3K12-binding inhibitory protein 1 (344 aa).

A Phosphoserine modification is found at Ser91. Residues Lys94, Lys118, Lys129, Lys139, Lys153, and Lys235 each participate in a glycyl lysine isopeptide (Lys-Gly) (interchain with G-Cter in SUMO2) cross-link. Positions 172–344 (AEINENNVRE…AESMATHHLP (173 aa)) are interaction with MAP3K12. Residues 271–285 (IYQRIKKLEDKILEL) are leucine-zipper 1. Lys301 is modified (N6-acetyllysine; alternate). A Glycyl lysine isopeptide (Lys-Gly) (interchain with G-Cter in SUMO2); alternate cross-link involves residue Lys301. Glycyl lysine isopeptide (Lys-Gly) (interchain with G-Cter in SUMO2) cross-links involve residues Lys304 and Lys325. The interval 314-329 (LAELDEKISALKQALL) is leucine-zipper 2.

In terms of assembly, component of the ADA2A-containing complex (ATAC), composed of KAT14, KAT2A, TADA2L, TADA3L, ZZ3, MBIP, WDR5, YEATS2, CCDC101 and DR1. In the complex, it probably interacts directly with KAT2A, KAT14 and WDR5. Ubiquitous. High expression seen in the heart and lung.

It localises to the nucleus. The protein localises to the cytoplasm. Functionally, inhibits the MAP3K12 activity to induce the activation of the JNK/SAPK pathway. Component of the ATAC complex, a complex with histone acetyltransferase activity on histones H3 and H4. The polypeptide is MAP3K12-binding inhibitory protein 1 (MBIP) (Homo sapiens (Human)).